A 1229-amino-acid chain; its full sequence is uncharacterized protein (1229 aa).

An N-terminal signal peptide occupies residues 1–19 (MKYFLLLFLLVLSFTLVES). N-linked (GlcNAc...) asparagine glycosylation is found at N238, N270, N370, N538, N691, and N701. The Galectin 1 domain occupies 678–813 (RMVNFANVME…QWNIDTVKMN (136 aa)). Residues 818-829 (HTTTVEPSTPLE) show a composition bias toward polar residues. The segment at 818 to 903 (HTTTVEPSTP…TLPPTTTPYN (86 aa)) is disordered. Over residues 830 to 846 (TASTSQSTPSATLTSTT) the composition is skewed to low complexity. A compositionally biased stretch (polar residues) spans 847-869 (ENIPSTSKIPETSTTQRPTSPIL). Residues 870–901 (TSGATSTSSSTESTTTSPTTSTTTTLPPTTTP) are compositionally biased toward low complexity. Residues N903, N938, and N948 are each glycosylated (N-linked (GlcNAc...) asparagine). The Galectin 2 domain maps to 925-1059 (RPVVFSRYME…ESTIDTVSMA (135 aa)). A disordered region spans residues 1061-1087 (VRPPTTPTTTTSTTTTTTPKLTTTSTL). Residues 1067 to 1087 (PTTTTSTTTTTTPKLTTTSTL) show a composition bias toward low complexity. N1146 carries N-linked (GlcNAc...) asparagine glycosylation.

This is an uncharacterized protein from Caenorhabditis elegans.